A 70-amino-acid polypeptide reads, in one-letter code: ATP synthase subunit c (70 aa).

The next 2 helical transmembrane spans lie at 3–23 (ALAAGIAMLAGLGVGIGIGIA) and 44–64 (LFFIGAALAEAVAIYSFVIAI).

It belongs to the ATPase C chain family. In terms of assembly, F-type ATPases have 2 components, F(1) - the catalytic core - and F(0) - the membrane proton channel. F(1) has five subunits: alpha(3), beta(3), gamma(1), delta(1), epsilon(1). F(0) has three main subunits: a(1), b(2) and c(10-14). The alpha and beta chains form an alternating ring which encloses part of the gamma chain. F(1) is attached to F(0) by a central stalk formed by the gamma and epsilon chains, while a peripheral stalk is formed by the delta and b chains.

It localises to the cell membrane. Functionally, f(1)F(0) ATP synthase produces ATP from ADP in the presence of a proton or sodium gradient. F-type ATPases consist of two structural domains, F(1) containing the extramembraneous catalytic core and F(0) containing the membrane proton channel, linked together by a central stalk and a peripheral stalk. During catalysis, ATP synthesis in the catalytic domain of F(1) is coupled via a rotary mechanism of the central stalk subunits to proton translocation. In terms of biological role, key component of the F(0) channel; it plays a direct role in translocation across the membrane. A homomeric c-ring of between 10-14 subunits forms the central stalk rotor element with the F(1) delta and epsilon subunits. The sequence is that of ATP synthase subunit c from Caldicellulosiruptor saccharolyticus (strain ATCC 43494 / DSM 8903 / Tp8T 6331).